The primary structure comprises 72 residues: Large ribosomal subunit protein uL29 (72 aa).

The protein belongs to the universal ribosomal protein uL29 family.

In Chlamydia trachomatis serovar L2 (strain ATCC VR-902B / DSM 19102 / 434/Bu), this protein is Large ribosomal subunit protein uL29.